We begin with the raw amino-acid sequence, 451 residues long: MREVISIHIGQAGIQVGNACWELYCLEHGIQPDGQMPSDKTIGGGDDAFNTFFSETGAGKHVPRCIFLDLEPTVVDEVRTGTYRQLFHPEQLISGKEDAANNFARGHYTIGKEIVDLALDRIRKLADNCTGLQGFLVFNAVGGGTGSGLGSLLLERLSVDYGKKSKLGFTVYPSPQVSTAVVEPYNSVLSTHSLLEHTDVAVMLDNEAIYDICRRSLDIERPTYTNLNRLIAQVISSLTASLRFDGALNVDITEFQTNLVPYPRIHFMLSSYAPIISAEKAYHEQLSVAEITNAAFEPASMMVKCDPRHGKYMACCLMYRGDVVPKDVNASVATIKTKRTIQFVDWCPTGFKCGINYQPPTVVPGGDLAKVQRAVCMISNSTAIGEIFSRLDHKFDLMYAKRAFVHWYVGEGMEEGEFSEAREDLAALEKDFEEVGAESAEGAGEGEGEEY.

Residue Gln11 coordinates GTP. N6-acetyllysine is present on Lys40. Positions 71, 144, 145, 179, 206, and 228 each coordinate GTP. Residue Glu71 participates in Mg(2+) binding. Residue Glu254 is part of the active site.

The protein belongs to the tubulin family. As to quaternary structure, dimer of alpha and beta chains. A typical microtubule is a hollow water-filled tube with an outer diameter of 25 nm and an inner diameter of 15 nM. Alpha-beta heterodimers associate head-to-tail to form protofilaments running lengthwise along the microtubule wall with the beta-tubulin subunit facing the microtubule plus end conferring a structural polarity. Microtubules usually have 13 protofilaments but different protofilament numbers can be found in some organisms and specialized cells. Requires Mg(2+) as cofactor. In terms of processing, undergoes a tyrosination/detyrosination cycle, the cyclic removal and re-addition of a C-terminal tyrosine residue by the enzymes tubulin tyrosine carboxypeptidase (TTCP) and tubulin tyrosine ligase (TTL), respectively. Post-translationally, acetylation of alpha chains at Lys-40 stabilizes microtubules and affects affinity and processivity of microtubule motors. This modification has a role in multiple cellular functions, ranging from cell motility, cell cycle progression or cell differentiation to intracellular trafficking and signaling.

It localises to the cytoplasm. It is found in the cytoskeleton. The catalysed reaction is GTP + H2O = GDP + phosphate + H(+). Functionally, tubulin is the major constituent of microtubules, a cylinder consisting of laterally associated linear protofilaments composed of alpha- and beta-tubulin heterodimers. Microtubules grow by the addition of GTP-tubulin dimers to the microtubule end, where a stabilizing cap forms. Below the cap, tubulin dimers are in GDP-bound state, owing to GTPase activity of alpha-tubulin. The polypeptide is Tubulin alpha-1 chain (TUBA1) (Chlamydomonas reinhardtii (Chlamydomonas smithii)).